The following is a 549-amino-acid chain: NAC domain-containing protein 53 (549 aa).

Residues 9 to 159 (LAPGFRFHPT…AFVLCRIFQK (151 aa)) form the NAC domain. The DNA-binding element occupies 108 to 165 (VGMKKTLVYHKGRAPRGERTNWVMHEYRLVDQDLDKTGVHQDAFVLCRIFQKSGSGPK). Basic and acidic residues predominate over residues 395 to 416 (LEKEETSRSKHVVEEKEKDEAS). Positions 395 to 418 (LEKEETSRSKHVVEEKEKDEASCS) are disordered. A helical membrane pass occupies residues 526-546 (LIFMCFWVLLLSVSFKVSILV).

In terms of tissue distribution, expressed in roots, rosette leaves, cauline leaves, shoot apex and stems.

It is found in the endoplasmic reticulum membrane. It localises to the nucleus. In terms of biological role, transcriptional activator activated by proteolytic cleavage through regulated intramembrane proteolysis (RIP). Promotes reactive oxygen species (ROS) production during drought-induced leaf senescence. In response to abscisic acid (ABA)-mediated drought stress signals, binds directly to the promoters of RBOHC and RBOHE genes, encoding ROS biosynthetic enzymes, resulting in ROS accumulation and triggering leaf senescence via programmed cell death (PCD). ROS-induced leaf senescence sustains plant survival under drought conditions. Involved in heat stress response. Modulates PCD through a ROS-mediated positive feedback control under heat stress conditions. This may provide an adaptation strategy for plant survival under extreme heat stress conditions. Acts as a repressor in preventing anther dehiscence during stamen development by suppressing genes that participate in jasmonic acid (JA) biosynthesis, such as DAD1, AOS, AOC3, OPR3 and 4CLL5/OPCL1. In Arabidopsis thaliana (Mouse-ear cress), this protein is NAC domain-containing protein 53.